Reading from the N-terminus, the 180-residue chain is NAD(P)H-quinone oxidoreductase subunit I, chloroplastic (180 aa).

2 consecutive 4Fe-4S ferredoxin-type domains span residues 55 to 84 (GRIH…VDWR) and 95 to 124 (LNYS…MTEE). [4Fe-4S] cluster contacts are provided by cysteine 64, cysteine 67, cysteine 70, cysteine 74, cysteine 104, cysteine 107, cysteine 110, and cysteine 114.

This sequence belongs to the complex I 23 kDa subunit family. In terms of assembly, NDH is composed of at least 16 different subunits, 5 of which are encoded in the nucleus. It depends on [4Fe-4S] cluster as a cofactor.

It is found in the plastid. Its subcellular location is the chloroplast thylakoid membrane. It catalyses the reaction a plastoquinone + NADH + (n+1) H(+)(in) = a plastoquinol + NAD(+) + n H(+)(out). The catalysed reaction is a plastoquinone + NADPH + (n+1) H(+)(in) = a plastoquinol + NADP(+) + n H(+)(out). Its function is as follows. NDH shuttles electrons from NAD(P)H:plastoquinone, via FMN and iron-sulfur (Fe-S) centers, to quinones in the photosynthetic chain and possibly in a chloroplast respiratory chain. The immediate electron acceptor for the enzyme in this species is believed to be plastoquinone. Couples the redox reaction to proton translocation, and thus conserves the redox energy in a proton gradient. The sequence is that of NAD(P)H-quinone oxidoreductase subunit I, chloroplastic from Triticum aestivum (Wheat).